Here is a 236-residue protein sequence, read N- to C-terminus: tRNA (guanine-N(1)-)-methyltransferase (236 aa).

S-adenosyl-L-methionine-binding positions include glycine 113 and 133-138; that span reads IGDYVL.

It belongs to the RNA methyltransferase TrmD family. As to quaternary structure, homodimer.

The protein localises to the cytoplasm. It carries out the reaction guanosine(37) in tRNA + S-adenosyl-L-methionine = N(1)-methylguanosine(37) in tRNA + S-adenosyl-L-homocysteine + H(+). Its function is as follows. Specifically methylates guanosine-37 in various tRNAs. The protein is tRNA (guanine-N(1)-)-methyltransferase of Lachnospira eligens (strain ATCC 27750 / DSM 3376 / VPI C15-48 / C15-B4) (Eubacterium eligens).